A 420-amino-acid chain; its full sequence is Succinate--CoA ligase [GDP-forming] subunit beta, mitochondrial (420 aa).

Residues 35–263 (KSLMDKYGVN…NASFRQKEIF (229 aa)) form the ATP-grasp domain. Residues Q46, 78 to 80 (GRG), and V135 contribute to the GTP site. Residues N232 and D246 each contribute to the Mg(2+) site. Residues N297 and 354–356 (GIM) each bind substrate.

Belongs to the succinate/malate CoA ligase beta subunit family. GTP-specific subunit beta subfamily. In terms of assembly, heterodimer of an alpha and a beta subunit. The beta subunit determines specificity for GTP. It depends on Mg(2+) as a cofactor.

The protein resides in the mitochondrion. It carries out the reaction GTP + succinate + CoA = succinyl-CoA + GDP + phosphate. The protein operates within carbohydrate metabolism; tricarboxylic acid cycle; succinate from succinyl-CoA (ligase route): step 1/1. Functionally, GTP-specific succinyl-CoA synthetase functions in the citric acid cycle (TCA), coupling the hydrolysis of succinyl-CoA to the synthesis of GTP and thus represents the only step of substrate-level phosphorylation in the TCA. The beta subunit provides nucleotide specificity of the enzyme and binds the substrate succinate, while the binding sites for coenzyme A and phosphate are found in the alpha subunit. The polypeptide is Succinate--CoA ligase [GDP-forming] subunit beta, mitochondrial (scsB) (Dictyostelium discoideum (Social amoeba)).